A 409-amino-acid chain; its full sequence is Serine/threonine transporter SstT (409 aa).

Transmembrane regions (helical) follow at residues 24-44, 48-68, 82-102, 142-162, 194-214, 218-238, 292-312, 319-339, and 365-385; these read LALG…AGLF, FVGA…AATI, IIVL…IAGM, AIAN…GAAL, LGIF…ALAG, LLAV…PAIV, IPLG…VLAM, GIQV…VSAC, and VAMQ…SAET.

It belongs to the dicarboxylate/amino acid:cation symporter (DAACS) (TC 2.A.23) family.

It localises to the cell inner membrane. It carries out the reaction L-serine(in) + Na(+)(in) = L-serine(out) + Na(+)(out). The catalysed reaction is L-threonine(in) + Na(+)(in) = L-threonine(out) + Na(+)(out). Functionally, involved in the import of serine and threonine into the cell, with the concomitant import of sodium (symport system). This is Serine/threonine transporter SstT from Neisseria meningitidis serogroup C / serotype 2a (strain ATCC 700532 / DSM 15464 / FAM18).